Consider the following 130-residue polypeptide: Small ribosomal subunit protein uS9 (130 aa).

Belongs to the universal ribosomal protein uS9 family.

This Streptococcus pyogenes serotype M1 protein is Small ribosomal subunit protein uS9.